Consider the following 153-residue polypeptide: ORM1-like protein 1 (153 aa).

At 1-26 the chain is on the cytoplasmic side; the sequence is MNVGVAHSEVNPNTRVMNSRGMWLTY. 2 helical membrane passes run 27-46 and 47-64; these read ALGV…FSVP and VAWT…YVFL. Over 65-100 the chain is Cytoplasmic; the sequence is HAVKGTPFETPDQGKARLLTHWEQLDYGVQFTSSRK. Residues 101–121 traverse the membrane as a helical segment; that stretch reads FFTISPIILYFLASFYTKYDP. At 122–123 the chain is on the extracellular side; that stretch reads TH. The chain crosses the membrane as a helical span at residues 124 to 140; that stretch reads FILNTASLLSVLIPKMP. Residues 141–153 lie on the Cytoplasmic side of the membrane; it reads QLHGVRIFGINKY.

It belongs to the ORM family. In terms of assembly, ceramide-sensitive subunit of the serine palmitoyltransferase (SPT) complex, which is also composed of SPTLC1, SPTLC2/3 and SPTSSA/B. In terms of tissue distribution, widely expressed. Expressed in adult and fetal heart, brain, lung, liver, skeletal muscle and kidney. Expressed in adult pancreas and placenta and in fetal spleen abd thymus. Expressed at intermediate level in pancreas, placenta and brain but low in skeletal muscle and lung.

It is found in the endoplasmic reticulum membrane. Functionally, plays an essential role in the homeostatic regulation of sphingolipid de novo biosynthesis by modulating the activity of the serine palmitoyltransferase (SPT) in response to ceramide levels. When complexed to SPT, the binding of ceramides to its N-terminus stabilizes a conformation that block SPT substrate entry, hence preventing SPT catalytic activity. Through this mechanism, maintains ceramide levels at sufficient concentrations for the production of complex sphingolipids, but which prevents the accumulation of ceramides to levels that trigger apoptosis. The chain is ORM1-like protein 1 (ORMDL1) from Homo sapiens (Human).